A 340-amino-acid polypeptide reads, in one-letter code: MTVIADTSRCFILPDLISYCQFPLRCNPHRDAAQSSTSWLINNYPGMSPEQLVEVRRLDADTLASYCYPDCDVERLRVASDFLAILFHLDDITDTMEEGGTEQLEGTIMDAFRSEGKLDQREDEPRVRVPAKDLWTRFIRNAKPCVQTRLRDNIALFFKTAREEARDRERGVLLDLESYINMRRGTSACLSCFALTEYSIGIELPQYVVDDPIVQALNQSANDLVSWSNDIYSFNNEQAHGIHNMIVILMKSQGLGMQDAIDYVSDLFKQTIDGFMENTQLLPSWGAAVDADVRLYVQGLQDWVVGNLHWSFATERYFGKRGAEIKATRVVELLPKKPVS.

4 residues coordinate Mg(2+): aspartate 90, asparagine 229, serine 233, and glutamate 237. The DDXXD motif motif lies at 90-94 (DDITD). The NSE/DTE motif motif lies at 229 to 237 (NDIYSFNNE). (2E,6E)-farnesyl diphosphate contacts are provided by arginine 316 and tyrosine 317.

Belongs to the terpene synthase family. Mg(2+) is required as a cofactor.

It carries out the reaction (2E,6E)-farnesyl diphosphate = delta-cadinene + diphosphate. It catalyses the reaction (2E,6E)-farnesyl diphosphate = bicyclogermacrene + diphosphate. Functionally, terpene cyclase that catalyzes the cyclization of farnesyl diphosphate (FPP) to various sesquiterpenes, including bicycloelemene, alpha-gurjunene, 9-epi-caryophylene, bicyclosesquiphellandrene, bicyclogermacrene and delta-cadinene. This is Sesquiterpene synthase 6 from Postia placenta (strain ATCC 44394 / Madison 698-R) (Brown rot fungus).